A 549-amino-acid polypeptide reads, in one-letter code: Glucose-6-phosphate isomerase (549 aa).

Residues lysine 80, lysine 228, and lysine 234 each carry the N6-acetyllysine modification. Glutamate 355 (proton donor) is an active-site residue. Residues histidine 386 and lysine 514 contribute to the active site.

This sequence belongs to the GPI family.

The protein resides in the cytoplasm. It carries out the reaction alpha-D-glucose 6-phosphate = beta-D-fructose 6-phosphate. The protein operates within carbohydrate biosynthesis; gluconeogenesis. It functions in the pathway carbohydrate degradation; glycolysis; D-glyceraldehyde 3-phosphate and glycerone phosphate from D-glucose: step 2/4. Functionally, catalyzes the reversible isomerization of glucose-6-phosphate to fructose-6-phosphate. The sequence is that of Glucose-6-phosphate isomerase from Escherichia coli (strain SE11).